The chain runs to 140 residues: Secreted RxLR effector protein 37 (140 aa).

The first 22 residues, Met1–Ala22, serve as a signal peptide directing secretion. Positions Arg57 to Arg76 match the RxLR-dEER motif.

It belongs to the RxLR effector family.

The protein resides in the secreted. The protein localises to the host nucleus. Its subcellular location is the host cytoplasm. Secreted effector that completely suppresses the host cell death induced by cell death-inducing proteins. This Plasmopara viticola (Downy mildew of grapevine) protein is Secreted RxLR effector protein 37.